The sequence spans 155 residues: Ribonuclease H (155 aa).

The RNase H type-1 domain maps to 5–146; it reads LAEVVEIFTD…ADMLANRGVQ (142 aa). 4 residues coordinate Mg(2+): D14, E52, D74, and D138.

This sequence belongs to the RNase H family. In terms of assembly, monomer. Mg(2+) is required as a cofactor.

Its subcellular location is the cytoplasm. It catalyses the reaction Endonucleolytic cleavage to 5'-phosphomonoester.. In terms of biological role, endonuclease that specifically degrades the RNA of RNA-DNA hybrids. This is Ribonuclease H from Nitrosospira multiformis (strain ATCC 25196 / NCIMB 11849 / C 71).